Here is a 216-residue protein sequence, read N- to C-terminus: UPF0502 protein VCM66_A0698 (216 aa).

The protein belongs to the UPF0502 family.

In Vibrio cholerae serotype O1 (strain M66-2), this protein is UPF0502 protein VCM66_A0698.